A 477-amino-acid chain; its full sequence is UDP-N-acetylmuramate--L-alanine ligase (477 aa).

122 to 128 (GTHGKTT) is a binding site for ATP.

The protein belongs to the MurCDEF family.

The protein localises to the cytoplasm. The enzyme catalyses UDP-N-acetyl-alpha-D-muramate + L-alanine + ATP = UDP-N-acetyl-alpha-D-muramoyl-L-alanine + ADP + phosphate + H(+). It functions in the pathway cell wall biogenesis; peptidoglycan biosynthesis. In terms of biological role, cell wall formation. In Xylella fastidiosa (strain M23), this protein is UDP-N-acetylmuramate--L-alanine ligase.